The following is a 156-amino-acid chain: Arginine repressor (156 aa).

This sequence belongs to the ArgR family.

The protein resides in the cytoplasm. It functions in the pathway amino-acid biosynthesis; L-arginine biosynthesis [regulation]. Regulates arginine biosynthesis genes. The protein is Arginine repressor of Pectobacterium atrosepticum (strain SCRI 1043 / ATCC BAA-672) (Erwinia carotovora subsp. atroseptica).